The following is a 402-amino-acid chain: tRNA pseudouridine synthase Pus10 (402 aa).

The THUMP domain occupies 37–159 (RLRGERLVEK…QIRVHVQINP (123 aa)). Asp228 functions as the Nucleophile in the catalytic mechanism. Positions 296 and 364 each coordinate substrate.

Belongs to the pseudouridine synthase Pus10 family.

The catalysed reaction is uridine(54) in tRNA = pseudouridine(54) in tRNA. It carries out the reaction uridine(55) in tRNA = pseudouridine(55) in tRNA. Functionally, responsible for synthesis of pseudouridine from uracil-54 and uracil-55 in the psi GC loop of transfer RNAs. The protein is tRNA pseudouridine synthase Pus10 of Methanothermobacter marburgensis (strain ATCC BAA-927 / DSM 2133 / JCM 14651 / NBRC 100331 / OCM 82 / Marburg) (Methanobacterium thermoautotrophicum).